Consider the following 197-residue polypeptide: Xanthine phosphoribosyltransferase (197 aa).

Xanthine is bound by residues L20 and N27. 5-phospho-alpha-D-ribose 1-diphosphate is bound at residue 128–132; it reads ANGQA. K156 provides a ligand contact to xanthine.

This sequence belongs to the purine/pyrimidine phosphoribosyltransferase family. Xpt subfamily. Homodimer.

The protein localises to the cytoplasm. The enzyme catalyses XMP + diphosphate = xanthine + 5-phospho-alpha-D-ribose 1-diphosphate. Its pathway is purine metabolism; XMP biosynthesis via salvage pathway; XMP from xanthine: step 1/1. Its function is as follows. Converts the preformed base xanthine, a product of nucleic acid breakdown, to xanthosine 5'-monophosphate (XMP), so it can be reused for RNA or DNA synthesis. The polypeptide is Xanthine phosphoribosyltransferase (Bacillus cereus (strain ATCC 14579 / DSM 31 / CCUG 7414 / JCM 2152 / NBRC 15305 / NCIMB 9373 / NCTC 2599 / NRRL B-3711)).